The sequence spans 335 residues: Pyridoxal 5'-phosphate synthase subunit PdxS (335 aa).

D-ribose 5-phosphate is bound at residue D59. K116 (schiff-base intermediate with D-ribose 5-phosphate) is an active-site residue. A D-ribose 5-phosphate-binding site is contributed by G188. K200 contributes to the D-glyceraldehyde 3-phosphate binding site. D-ribose 5-phosphate is bound by residues G253 and 274-275 (GS).

Belongs to the PdxS/SNZ family. In terms of assembly, in the presence of PdxT, forms a dodecamer of heterodimers.

It carries out the reaction aldehydo-D-ribose 5-phosphate + D-glyceraldehyde 3-phosphate + L-glutamine = pyridoxal 5'-phosphate + L-glutamate + phosphate + 3 H2O + H(+). It functions in the pathway cofactor biosynthesis; pyridoxal 5'-phosphate biosynthesis. Its function is as follows. Catalyzes the formation of pyridoxal 5'-phosphate from ribose 5-phosphate (RBP), glyceraldehyde 3-phosphate (G3P) and ammonia. The ammonia is provided by the PdxT subunit. Can also use ribulose 5-phosphate and dihydroxyacetone phosphate as substrates, resulting from enzyme-catalyzed isomerization of RBP and G3P, respectively. The protein is Pyridoxal 5'-phosphate synthase subunit PdxS of Hyperthermus butylicus (strain DSM 5456 / JCM 9403 / PLM1-5).